The chain runs to 179 residues: Inosine/xanthosine triphosphatase (179 aa).

Substrate-binding positions include 8–13 (TTNPAK) and 68–69 (EA). E68 serves as a coordination point for Mg(2+).

It belongs to the YjjX NTPase family. In terms of assembly, homodimer. The cofactor is Mg(2+). Mn(2+) is required as a cofactor.

It carries out the reaction XTP + H2O = XDP + phosphate + H(+). The catalysed reaction is ITP + H2O = IDP + phosphate + H(+). Its function is as follows. Phosphatase that hydrolyzes non-canonical purine nucleotides such as XTP and ITP to their respective diphosphate derivatives. Probably excludes non-canonical purines from DNA/RNA precursor pool, thus preventing their incorporation into DNA/RNA and avoiding chromosomal lesions. This is Inosine/xanthosine triphosphatase from Serratia proteamaculans (strain 568).